Consider the following 542-residue polypeptide: Glucose-6-phosphate isomerase (542 aa).

The Proton donor role is filled by E354. Active-site residues include H385 and K505.

The protein belongs to the GPI family.

Its subcellular location is the cytoplasm. The catalysed reaction is alpha-D-glucose 6-phosphate = beta-D-fructose 6-phosphate. It functions in the pathway carbohydrate biosynthesis; gluconeogenesis. The protein operates within carbohydrate degradation; glycolysis; D-glyceraldehyde 3-phosphate and glycerone phosphate from D-glucose: step 2/4. Its function is as follows. Catalyzes the reversible isomerization of glucose-6-phosphate to fructose-6-phosphate. In Nitrosospira multiformis (strain ATCC 25196 / NCIMB 11849 / C 71), this protein is Glucose-6-phosphate isomerase.